The sequence spans 288 residues: Alpha-acetolactate decarboxylase (288 aa).

The N-terminal stretch at Met1 to Gly23 is a signal peptide.

It belongs to the alpha-acetolactate decarboxylase family.

The catalysed reaction is (2S)-2-acetolactate + H(+) = (R)-acetoin + CO2. It functions in the pathway polyol metabolism; (R,R)-butane-2,3-diol biosynthesis; (R,R)-butane-2,3-diol from pyruvate: step 2/3. Functionally, converts acetolactate into acetoin. This is Alpha-acetolactate decarboxylase from Methanosarcina mazei (strain ATCC BAA-159 / DSM 3647 / Goe1 / Go1 / JCM 11833 / OCM 88) (Methanosarcina frisia).